Here is a 191-residue protein sequence, read N- to C-terminus: Glutathione-independent glyoxalase DJ-1 (191 aa).

Residues Glu16, Cys111, and His130 contribute to the active site.

The protein belongs to the peptidase C56 family.

It localises to the cytoplasm. The protein resides in the nucleus. It carries out the reaction methylglyoxal + H2O = (R)-lactate + H(+). Its function is as follows. Catalyzes the conversion of methylglyoxal (MG) to D-lactate in a single glutathione (GSH)-independent step. May play a role in detoxifying endogenously produced glyoxals. Involved in protection against reactive oxygen species (ROS). The protein is Glutathione-independent glyoxalase DJ-1 of Schizosaccharomyces pombe (strain 972 / ATCC 24843) (Fission yeast).